A 245-amino-acid polypeptide reads, in one-letter code: Small ribosomal subunit protein uS2 (245 aa).

Belongs to the universal ribosomal protein uS2 family.

The sequence is that of Small ribosomal subunit protein uS2 from Pseudomonas fluorescens (strain ATCC BAA-477 / NRRL B-23932 / Pf-5).